The primary structure comprises 437 residues: MANVVVIGAQWGDEGKGKITDLLSRSADVVVRYQGGVNAGHTIVVDGQVLKLHLIPSGILYPDTICLIGSGTVVDPRVMLGELDMLIENGIDISGLQLASTAHVTMPYHRLLDQAMERQRGERRIGTTGRGIGPTYADKSQRSGIRVIDLLDEQRLRDRLEGPLQEKNQLLQTIYGMDPLNADEVIAEYLAYGKRLAPHVVDCSRAIHGAARNRKNILFEGAQGTLLDLDHGTYPYVTSSNPVSGGACIGAGVGPTLIDRVIGVAKAYTTRVGEGPFPTELDGSLNDHLCDRGGEFGTTTGRRRRCGWFDGVIGRYAVEVNGLDCLAVTKLDVLDEIDALQVCVAYELDGERIEHFPSCSEAFARCKPIYETLPGWQCSTADCRRLEDLPEKAMAYLRFLADLMEVPIAIVSLGASRDQTIVVEDPIHGPKRALLSA.

GTP-binding positions include 12 to 18 and 40 to 42; these read GDEGKGK and GHT. The active-site Proton acceptor is the Asp-13. Mg(2+) is bound by residues Asp-13 and Gly-40. Residues 13–16, 38–41, Thr-128, Arg-142, Gln-223, Thr-238, and Arg-302 each bind IMP; these read DEGK and NAGH. The active-site Proton donor is His-41. Residues 119 to 138 form a disordered region; it reads QRGERRIGTTGRGIGPTYAD. Residue 298–304 coordinates substrate; it reads TTTGRRR. GTP-binding positions include Arg-304, 330–332, and 412–414; these read KLD and SLG.

This sequence belongs to the adenylosuccinate synthetase family. In terms of assembly, homodimer. Mg(2+) is required as a cofactor.

The protein resides in the cytoplasm. The catalysed reaction is IMP + L-aspartate + GTP = N(6)-(1,2-dicarboxyethyl)-AMP + GDP + phosphate + 2 H(+). It participates in purine metabolism; AMP biosynthesis via de novo pathway; AMP from IMP: step 1/2. Functionally, plays an important role in the de novo pathway of purine nucleotide biosynthesis. Catalyzes the first committed step in the biosynthesis of AMP from IMP. This is Adenylosuccinate synthetase from Synechococcus sp. (strain WH7803).